Here is a 212-residue protein sequence, read N- to C-terminus: Regulatory protein RecX (212 aa).

This sequence belongs to the RecX family.

The protein resides in the cytoplasm. In terms of biological role, modulates RecA activity. This chain is Regulatory protein RecX, found in Clostridioides difficile (strain 630) (Peptoclostridium difficile).